Here is a 309-residue protein sequence, read N- to C-terminus: uncharacterized protein (309 aa).

Residues 9 to 55 form the RPE1 insert domain; that stretch reads NFLYNIANKDGFKGYKECRTSAYKNVFDDSSTKSTSKFHLGISDTKN. A helical transmembrane segment spans residues 62–82; it reads IIGLILIIFAGVLFYAYILQH.

The protein belongs to the LicD transferase family.

The protein resides in the membrane. This is an uncharacterized protein from Rickettsia typhi (strain ATCC VR-144 / Wilmington).